Consider the following 341-residue polypeptide: Flagellar P-ring protein (341 aa).

The N-terminal stretch at 1 to 19 is a signal peptide; it reads MKQVFLWLIFVLAFHKLLA.

This sequence belongs to the FlgI family. In terms of assembly, the basal body constitutes a major portion of the flagellar organelle and consists of four rings (L,P,S, and M) mounted on a central rod.

Its subcellular location is the periplasm. The protein resides in the bacterial flagellum basal body. Functionally, assembles around the rod to form the L-ring and probably protects the motor/basal body from shearing forces during rotation. In Helicobacter acinonychis (strain Sheeba), this protein is Flagellar P-ring protein.